Consider the following 108-residue polypeptide: Nucleoid-associated protein GK0018 (108 aa).

The tract at residues methionine 1 to glutamate 32 is disordered. Low complexity predominate over residues methionine 9–lysine 18. A compositionally biased stretch (basic and acidic residues) spans methionine 19–glutamate 32.

Belongs to the YbaB/EbfC family. As to quaternary structure, homodimer.

It is found in the cytoplasm. The protein resides in the nucleoid. Its function is as follows. Binds to DNA and alters its conformation. May be involved in regulation of gene expression, nucleoid organization and DNA protection. In Geobacillus kaustophilus (strain HTA426), this protein is Nucleoid-associated protein GK0018.